We begin with the raw amino-acid sequence, 414 residues long: Transposon Ty4-J Gag polyprotein (414 aa).

The stretch at 39–115 (RKVSIKDEQV…IQLLETNENN (77 aa)) forms a coiled coil. Residues 378–414 (GAQRQQPLKSSAKRTKVLEQDTKKVEQSVQQQKTGNY) are disordered. Basic and acidic residues predominate over residues 393–403 (KVLEQDTKKVE). Residues 404 to 414 (QSVQQQKTGNY) are compositionally biased toward polar residues.

Its function is as follows. Capsid protein (CA) is the structural component of the virus-like particle (VLP), forming the shell that encapsulates the retrotransposons dimeric RNA genome. The chain is Transposon Ty4-J Gag polyprotein (TY4A-J) from Saccharomyces cerevisiae (strain ATCC 204508 / S288c) (Baker's yeast).